A 701-amino-acid chain; its full sequence is Phytyl ester synthase 2, chloroplastic (701 aa).

The N-terminal 65 residues, 1-65, are a transit peptide targeting the chloroplast; sequence MAVTVLPSVS…KNNDENRATV (65 aa). The disordered stretch occupies residues 37–64; that stretch reads SVTSTSSPPTPSSGVQRRRKNNDENRAT.

It belongs to the diacylglycerol acyltransferase family.

The protein localises to the plastid. The protein resides in the chloroplast. It is found in the plastoglobule. It carries out the reaction a 1,2-diacyl-3-O-(beta-D-galactosyl)-sn-glycerol + a 1,2-diacylglycerol = an acyl-3-O-(beta-D-galactosyl)-sn-glycerol + a triacylglycerol. It catalyses the reaction a 1,2-diacylglycerol + a fatty acyl-CoA = a triacylglycerol + CoA. The enzyme catalyses a fatty acyl-[ACP] + a 1,2-diacylglycerol = a triacylglycerol + holo-[ACP]. The catalysed reaction is phytol + a fatty acyl-CoA = a fatty acid phytyl ester + CoA. It carries out the reaction phytol + tetradecanoyl-CoA = tetradecanoate phytyl ester + CoA. It catalyses the reaction a 1,3-diacylglycerol + a fatty acyl-CoA = a triacylglycerol + CoA. The enzyme catalyses 1,2-dihexanoylglycerol + tetradecanoyl-CoA = 1,2-dihexanoyl-3-tetradecanoylglycerol + CoA. The catalysed reaction is 1,2-dihexanoylglycerol + hexadecanoyl-CoA = 1,2-dihexanoyl-3-hexadecanoylglycerol + CoA. It carries out the reaction 1,2-dihexanoylglycerol + octadecanoyl-CoA = 1,2-dihexanoyl-3-octadecanoylglycerol + CoA. It catalyses the reaction (7Z,10Z,13Z)-hexadecatrienoyl-CoA + 1,2-dihexanoylglycerol = 1,2-dihexanoyl-3-(7Z,10Z,13Z-hexadecatrienoyl)-glycerol + CoA. The enzyme catalyses 1,2-dihexanoylglycerol + (9Z)-octadecenoyl-CoA = 1,2-dihexanoyl-3-(9Z-octadecenoyl)-glycerol + CoA. The catalysed reaction is 1,2-dihexanoylglycerol + (9Z,12Z,15Z)-octadecatrienoyl-CoA = 1,2-dihexanoyl-3-(9Z,12Z,15Z-octadecatrienoyl)-glycerol + CoA. It carries out the reaction phytol + decanoyl-CoA = decanoate phytyl ester + CoA. It catalyses the reaction (7Z,10Z,13Z)-hexadecatrienoyl-CoA + phytol = (7Z,10Z,13Z)-hexadecatrienoate phytyl ester + CoA. The enzyme catalyses phytol + dodecanoyl-CoA = dodecanoate phytyl ester + CoA. Its function is as follows. Acyltransferase involved in fatty acid phytyl ester synthesis in chloroplasts, a process required for the maintenance of the photosynthetic membrane integrity during abiotic stress and senescence. Exhibits phytyl ester synthesis and diacylglycerol acyltransferase activities with broad substrate specificities, and can employ acyl-CoAs, acyl carrier proteins, and galactolipids as acyl donors. The chain is Phytyl ester synthase 2, chloroplastic from Arabidopsis thaliana (Mouse-ear cress).